The following is a 111-amino-acid chain: Probable 4-amino-4-deoxy-L-arabinose-phosphoundecaprenol flippase subunit ArnE (111 aa).

Residues 1–35 lie on the Cytoplasmic side of the membrane; the sequence is MIWLTLVFASLLSVAGQLCQKQATCFAAVNKRRKH. The chain crosses the membrane as a helical span at residues 36–56; the sequence is IVLWLGLALACLGLAMVLWLL. The region spanning 40–109 is the EamA domain; the sequence is LGLALACLGL…IIGGIVILGS (70 aa). Topologically, residues 57–60 are periplasmic; the sequence is VLQN. A helical transmembrane segment spans residues 61 to 81; the sequence is VPVGIAYPMLSLNFVWVTLAA. Residues 82–87 are Cytoplasmic-facing; it reads VKLWHE. Residues 88-108 traverse the membrane as a helical segment; the sequence is PVSLRHWCGVAFIIGGIVILG. Residues 109–111 lie on the Periplasmic side of the membrane; that stretch reads STV.

The protein belongs to the ArnE family. In terms of assembly, heterodimer of ArnE and ArnF.

The protein localises to the cell inner membrane. It functions in the pathway bacterial outer membrane biogenesis; lipopolysaccharide biosynthesis. Functionally, translocates 4-amino-4-deoxy-L-arabinose-phosphoundecaprenol (alpha-L-Ara4N-phosphoundecaprenol) from the cytoplasmic to the periplasmic side of the inner membrane. This is Probable 4-amino-4-deoxy-L-arabinose-phosphoundecaprenol flippase subunit ArnE from Escherichia coli (strain UTI89 / UPEC).